A 103-amino-acid chain; its full sequence is MQANDITFFQRFQDDILAGRKTITIRDAAESHFKPGDVLRVGRYEDDGYFCTIAVTATSTVTLDTLTEQHAQQENMTLGQLRQVISDIYPGESQFYVIEFKTL.

One can recognise an ASCH domain in the interval 6 to 100; the sequence is ITFFQRFQDD…GESQFYVIEF (95 aa). The Proton acceptor role is filled by lysine 21. Threonine 24 acts as the Nucleophile in catalysis. Glutamate 74 acts as the Proton donor in catalysis.

It belongs to the N(4)-acetylcytidine amidohydrolase family.

The enzyme catalyses N(4)-acetylcytidine + H2O = cytidine + acetate + H(+). The catalysed reaction is N(4)-acetyl-2'-deoxycytidine + H2O = 2'-deoxycytidine + acetate + H(+). It catalyses the reaction N(4)-acetylcytosine + H2O = cytosine + acetate + H(+). In terms of biological role, catalyzes the hydrolysis of N(4)-acetylcytidine (ac4C). The chain is N(4)-acetylcytidine amidohydrolase from Klebsiella pneumoniae subsp. pneumoniae (strain ATCC 700721 / MGH 78578).